The primary structure comprises 546 residues: Probable protein kinase UbiB (546 aa).

In terms of domain architecture, Protein kinase spans 124-502; sequence DFDIQPLASA…HVRQSQSRYL (379 aa). ATP-binding positions include 130 to 138 and Lys153; that span reads LASASIAQV. Asp288 serves as the catalytic Proton acceptor. The next 2 membrane-spanning stretches (helical) occupy residues 501-521 and 522-542; these read YLLGIGATLLLSGSFLLVNRP and EWGLMPSWLMVGGVVVWLVGW.

This sequence belongs to the ABC1 family. UbiB subfamily.

The protein localises to the cell inner membrane. It participates in cofactor biosynthesis; ubiquinone biosynthesis [regulation]. Its function is as follows. Is probably a protein kinase regulator of UbiI activity which is involved in aerobic coenzyme Q (ubiquinone) biosynthesis. The protein is Probable protein kinase UbiB of Salmonella gallinarum (strain 287/91 / NCTC 13346).